A 608-amino-acid chain; its full sequence is Preterminal protein (608 aa).

The Nuclear localization signal signature appears at 338–347 (RLPMRRRRRR). Positions 342–377 (RRRRRRAPPPPPMSEELSEPEVEAFPPASPPRRSFE) are disordered. At serine 536 the chain carries O-(5'-phospho-DNA)-serine.

The protein belongs to the adenoviridae terminal protein family. As to quaternary structure, heterodimer with the polymerase; this heterodimer binds to bp 9 to 18 of the genome. Interacts with host POU2F1; POU2F1 binds to the auxiliary sequences in the inverted terminal repeats and tethers the pTP-POL heterodimer to the origin DNA thereby participating in the assembly of the pre-initiation complex (POL-TP-DBP-NFIA-POU2F1). In terms of processing, preterminal protein is used to replicate viral genome, upon genomic encapsidation it is processed first into iTP and finally into TP by adenovirus protease.

The protein resides in the host nucleus matrix. Its function is as follows. Protein covalently bound to the viral DNA that acts as a primer for viral genomic replication by DNA strand displacement. Assembles on the viral origin of replication in an initiation complex with viral polymerase, DBP, host NFIA and host POU2F1/OCT1. During initiation, the polymerase covalently couples the first dCTP with Ser-580 of pTP. The terminal protein stimulates the template activity over 20 fold compared to protein-free templates. Neo-synthesized viral genomes are linked to two preterminal proteins, one for each 5' end. These new genomes are encapsidated in the nucleus, and during capsid maturation by viral protease, preterminal protein is first cleaved into intermediary (iTP), then into mature TP. May play a role in host nuclear matrix localization of genomic DNA. The chain is Preterminal protein from Canine adenovirus serotype 1 (strain CLL) (CAdV-1).